The following is a 141-amino-acid chain: Translation initiation factor 2 subunit beta (141 aa).

Belongs to the eIF-2-beta/eIF-5 family. As to quaternary structure, heterotrimer composed of an alpha, a beta and a gamma chain.

Its function is as follows. eIF-2 functions in the early steps of protein synthesis by forming a ternary complex with GTP and initiator tRNA. This Thermofilum pendens (strain DSM 2475 / Hrk 5) protein is Translation initiation factor 2 subunit beta.